Here is an 85-residue protein sequence, read N- to C-terminus: MAKGQSLQDPFLNALRRERIPVSIYLVNGIKLQGQVESFDQFVILLKNTVSQMVYKHAISTVVPARPVAHHTAPAAGDSDSQSEE.

In terms of domain architecture, Sm spans 9–68 (DPFLNALRRERIPVSIYLVNGIKLQGQVESFDQFVILLKNTVSQMVYKHAISTVVPARPV).

The protein belongs to the Hfq family. In terms of assembly, homohexamer.

In terms of biological role, RNA chaperone that binds small regulatory RNA (sRNAs) and mRNAs to facilitate mRNA translational regulation in response to envelope stress, environmental stress and changes in metabolite concentrations. Also binds with high specificity to tRNAs. The protein is RNA-binding protein Hfq of Tolumonas auensis (strain DSM 9187 / NBRC 110442 / TA 4).